A 425-amino-acid polypeptide reads, in one-letter code: Glutamyl-tRNA reductase (425 aa).

Residues 49–52, S107, 112–114, and Q118 each bind substrate; these read TCNR and EPQ. C50 functions as the Nucleophile in the catalytic mechanism. Residue 187–192 coordinates NADP(+); that stretch reads GAGETI.

Belongs to the glutamyl-tRNA reductase family. In terms of assembly, homodimer.

It carries out the reaction (S)-4-amino-5-oxopentanoate + tRNA(Glu) + NADP(+) = L-glutamyl-tRNA(Glu) + NADPH + H(+). It functions in the pathway porphyrin-containing compound metabolism; protoporphyrin-IX biosynthesis; 5-aminolevulinate from L-glutamyl-tRNA(Glu): step 1/2. Its function is as follows. Catalyzes the NADPH-dependent reduction of glutamyl-tRNA(Glu) to glutamate 1-semialdehyde (GSA). This Pseudomonas putida (strain ATCC 700007 / DSM 6899 / JCM 31910 / BCRC 17059 / LMG 24140 / F1) protein is Glutamyl-tRNA reductase.